We begin with the raw amino-acid sequence, 552 residues long: (R)-mandelonitrile lyase-like (552 aa).

A signal peptide spans 1 to 28 (MTKRIDSSLLYTALVVLLLLGVVHRSNA). Asn-44 carries an N-linked (GlcNAc...) asparagine glycan. Residue 55 to 82 (DYIIVGGGTAGCPLAATLSQSFRVLLLE) participates in FAD binding. N-linked (GlcNAc...) asparagine glycosylation is found at Asn-162, Asn-259, and Asn-434. His-492 acts as the Proton acceptor in catalysis.

Belongs to the GMC oxidoreductase family. Monomer. FAD is required as a cofactor. Post-translationally, glycosylated.

It catalyses the reaction (R)-mandelonitrile = benzaldehyde + hydrogen cyanide. The protein is (R)-mandelonitrile lyase-like of Arabidopsis thaliana (Mouse-ear cress).